A 229-amino-acid chain; its full sequence is UPF0758 protein Mbar_A2303 (229 aa).

The MPN domain occupies K106 to V228. H177, H179, and D190 together coordinate Zn(2+). The JAMM motif signature appears at H177–D190.

It belongs to the UPF0758 family.

This chain is UPF0758 protein Mbar_A2303, found in Methanosarcina barkeri (strain Fusaro / DSM 804).